Reading from the N-terminus, the 430-residue chain is Methylthioribose kinase 1 (430 aa).

Residues 52–56, K71, and 125–127 contribute to the ATP site; these read DGNLN and RYI. N56 is a substrate binding site. D246 lines the substrate pocket. Residue 263–265 participates in ATP binding; it reads DPE. R373 is a substrate binding site.

The protein belongs to the methylthioribose kinase family. In terms of assembly, homodimer.

It carries out the reaction 5-(methylsulfanyl)-D-ribose + ATP = 5-(methylsulfanyl)-alpha-D-ribose 1-phosphate + ADP + H(+). The protein operates within amino-acid biosynthesis; L-methionine biosynthesis via salvage pathway; S-methyl-5-thio-alpha-D-ribose 1-phosphate from S-methyl-5'-thioadenosine (hydrolase route): step 2/2. Functionally, catalyzes the phosphorylation of methylthioribose into methylthioribose-1-phosphate. The chain is Methylthioribose kinase 1 from Oryza sativa subsp. japonica (Rice).